The sequence spans 30 residues: Bowman-Birk type proteinase inhibitor 4 (30 aa).

2 cysteine pairs are disulfide-bonded: C9–C24 and C14–C22.

Functionally, inhibits trypsin (IC(50)=17.60 nM) and, to a lesser extent, alpha-chymotrypsin (IC(50)=2.38 uM). In Lathyrus sativus (White vetchling), this protein is Bowman-Birk type proteinase inhibitor 4.